Consider the following 352-residue polypeptide: Protein RecA (352 aa).

Position 65 to 72 (65 to 72 (GPESSGKT)) interacts with ATP.

Belongs to the RecA family.

The protein resides in the cytoplasm. Its function is as follows. Can catalyze the hydrolysis of ATP in the presence of single-stranded DNA, the ATP-dependent uptake of single-stranded DNA by duplex DNA, and the ATP-dependent hybridization of homologous single-stranded DNAs. It interacts with LexA causing its activation and leading to its autocatalytic cleavage. This chain is Protein RecA, found in Pseudomonas fluorescens (strain Pf0-1).